A 269-amino-acid chain; its full sequence is Expansin-B11 (269 aa).

The first 30 residues, 1–30 (MTVVSIMWSLVQVQVLVAVALAFLVGGAWC), serve as a signal peptide directing secretion. N40 carries an N-linked (GlcNAc...) asparagine glycan. The region spanning 69–175 (GGGCGYKDVN…RRVKCKYGSK (107 aa)) is the Expansin-like EG45 domain. Cystine bridges form between C72–C100, C103–C170, and C108–C114. The region spanning 187 to 268 (NYLALLVKYV…GWKPNTAYTA (82 aa)) is the Expansin-like CBD domain.

Belongs to the expansin family. Expansin B subfamily. As to expression, expressed in pollen.

Its subcellular location is the secreted. It is found in the cell wall. The protein localises to the membrane. Functionally, may aid fertilization by loosening the cell wall of the stigma and style, thereby facilitating penetration of the pollen tube. Acts selectively on grass cell walls, which are relatively poor in pectins and xyloglucans and rich in glucuronoarabinoxylans and (1-3),(1-4)-beta-D-glucans, when compared with cell walls of other angiosperms, including other monocots. The chain is Expansin-B11 (EXPB11) from Zea mays (Maize).